A 489-amino-acid polypeptide reads, in one-letter code: uncharacterized protein (489 aa).

The residue at position 26 (Thr26) is a Phosphothreonine. Ser27 carries the phosphoserine modification. Helical transmembrane passes span 63 to 83 (IVYLIIVACGSFIITGGIEFA), 182 to 202 (LVWSVPLWFLFWPATVGILCA), and 221 to 241 (VFKLIFGGGEGFVLTPWIAFL). 3 disordered regions span residues 260-312 (PKTS…APLE), 401-435 (STLLPQDGNAVHHDTDAPSLSNVRKSVDSPRVPPS), and 450-489 (PSINNVGGSTAPSVNNQEREYDYDDTSSRSSTLTERPVVH). Position 263 is a phosphoserine (Ser263). Residues 268 to 282 (QRGTSSSQPSENDAN) show a composition bias toward polar residues. The span at 450–465 (PSINNVGGSTAPSVNN) shows a compositional bias: polar residues. Positions 477 to 489 (SRSSTLTERPVVH) are enriched in low complexity.

The protein resides in the endoplasmic reticulum membrane. This is an uncharacterized protein from Schizosaccharomyces pombe (strain 972 / ATCC 24843) (Fission yeast).